Consider the following 463-residue polypeptide: Methionine aminopeptidase 2-1 (463 aa).

The disordered stretch occupies residues 1-98; the sequence is MGSKTPEEQI…PPRVPLSDLF (98 aa). The segment covering 30–45 has biased composition (basic and acidic residues); it reads RGTHLSRDGDGSLGDH. Acidic residues predominate over residues 46-55; the sequence is GDDDDADEDD. Over residues 69–81 the composition is skewed to basic residues; it reads KKKKRPKKKKKPA. Residue H214 participates in substrate binding. The a divalent metal cation site is built by D235, D246, and H315. Residue H323 coordinates substrate. 2 residues coordinate a divalent metal cation: E348 and E444.

Belongs to the peptidase M24A family. Methionine aminopeptidase eukaryotic type 2 subfamily. Co(2+) is required as a cofactor. It depends on Zn(2+) as a cofactor. Requires Mn(2+) as cofactor. The cofactor is Fe(2+).

Its subcellular location is the cytoplasm. The enzyme catalyses Release of N-terminal amino acids, preferentially methionine, from peptides and arylamides.. Its function is as follows. Cotranslationally removes the N-terminal methionine from nascent proteins. The N-terminal methionine is often cleaved when the second residue in the primary sequence is small and uncharged (Met-Ala-, Cys, Gly, Pro, Ser, Thr, or Val). In Colletotrichum graminicola (strain M1.001 / M2 / FGSC 10212) (Maize anthracnose fungus), this protein is Methionine aminopeptidase 2-1.